The primary structure comprises 221 residues: Thymidylate kinase (221 aa).

ATP is bound at residue 10–17 (GIDGAGKT).

Belongs to the thymidylate kinase family.

It catalyses the reaction dTMP + ATP = dTDP + ADP. In terms of biological role, phosphorylation of dTMP to form dTDP in both de novo and salvage pathways of dTTP synthesis. The chain is Thymidylate kinase from Desulforudis audaxviator (strain MP104C).